A 427-amino-acid chain; its full sequence is Gamma-glutamyl phosphate reductase (427 aa).

This sequence belongs to the gamma-glutamyl phosphate reductase family.

It is found in the cytoplasm. The enzyme catalyses L-glutamate 5-semialdehyde + phosphate + NADP(+) = L-glutamyl 5-phosphate + NADPH + H(+). It functions in the pathway amino-acid biosynthesis; L-proline biosynthesis; L-glutamate 5-semialdehyde from L-glutamate: step 2/2. Its function is as follows. Catalyzes the NADPH-dependent reduction of L-glutamate 5-phosphate into L-glutamate 5-semialdehyde and phosphate. The product spontaneously undergoes cyclization to form 1-pyrroline-5-carboxylate. This chain is Gamma-glutamyl phosphate reductase, found in Rhizobium meliloti (strain 1021) (Ensifer meliloti).